The primary structure comprises 423 residues: Gamma-glutamyl phosphate reductase (423 aa).

This sequence belongs to the gamma-glutamyl phosphate reductase family.

The protein resides in the cytoplasm. It carries out the reaction L-glutamate 5-semialdehyde + phosphate + NADP(+) = L-glutamyl 5-phosphate + NADPH + H(+). It participates in amino-acid biosynthesis; L-proline biosynthesis; L-glutamate 5-semialdehyde from L-glutamate: step 2/2. Its function is as follows. Catalyzes the NADPH-dependent reduction of L-glutamate 5-phosphate into L-glutamate 5-semialdehyde and phosphate. The product spontaneously undergoes cyclization to form 1-pyrroline-5-carboxylate. The sequence is that of Gamma-glutamyl phosphate reductase from Burkholderia ambifaria (strain MC40-6).